We begin with the raw amino-acid sequence, 435 residues long: tRNA modification GTPase MnmE (435 aa).

The (6S)-5-formyl-5,6,7,8-tetrahydrofolate site is built by arginine 24, glutamate 85, and arginine 124. Positions 220-361 (GLVFTIVGAP…LRTALAERAR (142 aa)) constitute a TrmE-type G domain. Asparagine 230 serves as a coordination point for K(+). Residues 230–235 (NVGKSS), 249–255 (SAIAGTT), and 274–277 (DTAG) each bind GTP. Position 234 (serine 234) interacts with Mg(2+). Positions 249, 251, and 254 each coordinate K(+). Threonine 255 contributes to the Mg(2+) binding site. Lysine 435 provides a ligand contact to (6S)-5-formyl-5,6,7,8-tetrahydrofolate.

The protein belongs to the TRAFAC class TrmE-Era-EngA-EngB-Septin-like GTPase superfamily. TrmE GTPase family. Homodimer. Heterotetramer of two MnmE and two MnmG subunits. The cofactor is K(+).

The protein localises to the cytoplasm. Exhibits a very high intrinsic GTPase hydrolysis rate. Involved in the addition of a carboxymethylaminomethyl (cmnm) group at the wobble position (U34) of certain tRNAs, forming tRNA-cmnm(5)s(2)U34. The chain is tRNA modification GTPase MnmE from Gluconacetobacter diazotrophicus (strain ATCC 49037 / DSM 5601 / CCUG 37298 / CIP 103539 / LMG 7603 / PAl5).